The following is a 242-amino-acid chain: Ribose-5-phosphate isomerase A (242 aa).

Substrate-binding positions include 39-42 (SGST), 95-98 (DGAD), and 108-111 (KGGG). Glutamate 117 functions as the Proton acceptor in the catalytic mechanism. Residue lysine 135 participates in substrate binding.

It belongs to the ribose 5-phosphate isomerase family. As to quaternary structure, homodimer.

The catalysed reaction is aldehydo-D-ribose 5-phosphate = D-ribulose 5-phosphate. It participates in carbohydrate degradation; pentose phosphate pathway; D-ribose 5-phosphate from D-ribulose 5-phosphate (non-oxidative stage): step 1/1. Its function is as follows. Catalyzes the reversible conversion of ribose-5-phosphate to ribulose 5-phosphate. This is Ribose-5-phosphate isomerase A from Chlamydia trachomatis serovar A (strain ATCC VR-571B / DSM 19440 / HAR-13).